The primary structure comprises 119 residues: Divalent-cation tolerance protein CutA (119 aa).

Cu cation-binding residues include cysteine 23, histidine 90, and histidine 91.

The protein belongs to the CutA family. In terms of assembly, homotrimer. It depends on Cu cation as a cofactor.

The protein localises to the cytoplasm. Involved in resistance toward heavy metals. This Yersinia pseudotuberculosis serotype O:1b (strain IP 31758) protein is Divalent-cation tolerance protein CutA.